The primary structure comprises 102 residues: Small ribosomal subunit protein uS10 (102 aa).

Belongs to the universal ribosomal protein uS10 family. In terms of assembly, part of the 30S ribosomal subunit.

Its function is as follows. Involved in the binding of tRNA to the ribosomes. In Methylobacterium nodulans (strain LMG 21967 / CNCM I-2342 / ORS 2060), this protein is Small ribosomal subunit protein uS10.